Reading from the N-terminus, the 341-residue chain is O(6)-methylguanine-induced apoptosis 2 (341 aa).

The segment covering 1 to 10 has biased composition (polar residues); the sequence is MSQKFANTGS. Residues 1–23 are disordered; the sequence is MSQKFANTGSFIEREDLGKPNKG. Residues 12 to 23 are compositionally biased toward basic and acidic residues; it reads IEREDLGKPNKG. STPGR repeat units lie at residues 73 to 80, 115 to 123, 154 to 160, 194 to 213, 232 to 254, 273 to 284, and 313 to 323; these read PGPGFYNV, PAANAYTIR, PAPNHYN, GPAPGHYDVNESLVRESPKV, GPGPGYYNPNDQTKILRKSHLPK, LPGPGQYEIVNY, and LPGPASYKPEI. Y78 carries the post-translational modification Phosphotyrosine.

It belongs to the STPG1 family.

The protein localises to the cytoplasm. It is found in the nucleus. In terms of biological role, may positively contribute to the induction of apoptosis triggered by O(6)-methylguanine. The sequence is that of O(6)-methylguanine-induced apoptosis 2 (Stpg1) from Rattus norvegicus (Rat).